The chain runs to 357 residues: Elongation factor Ts (357 aa).

The segment at Thr82–Val85 is involved in Mg(2+) ion dislocation from EF-Tu.

The protein belongs to the EF-Ts family.

The protein resides in the cytoplasm. Functionally, associates with the EF-Tu.GDP complex and induces the exchange of GDP to GTP. It remains bound to the aminoacyl-tRNA.EF-Tu.GTP complex up to the GTP hydrolysis stage on the ribosome. The protein is Elongation factor Ts of Campylobacter jejuni subsp. doylei (strain ATCC BAA-1458 / RM4099 / 269.97).